A 356-amino-acid polypeptide reads, in one-letter code: tRNA (guanine(26)-N(2))-dimethyltransferase (356 aa).

The 348-residue stretch at 5–352 (VLRREGTVEF…VSAGEVERVL (348 aa)) folds into the Trm1 methyltransferase domain. S-adenosyl-L-methionine-binding residues include Arg-40, Arg-67, Asp-85, Asp-111, and Ala-112.

The protein belongs to the class I-like SAM-binding methyltransferase superfamily. Trm1 family.

It carries out the reaction guanosine(26) in tRNA + 2 S-adenosyl-L-methionine = N(2)-dimethylguanosine(26) in tRNA + 2 S-adenosyl-L-homocysteine + 2 H(+). Dimethylates a single guanine residue at position 26 of a number of tRNAs using S-adenosyl-L-methionine as donor of the methyl groups. In Pyrobaculum arsenaticum (strain DSM 13514 / JCM 11321 / PZ6), this protein is tRNA (guanine(26)-N(2))-dimethyltransferase.